Reading from the N-terminus, the 339-residue chain is Exopolyphosphatase 1 (339 aa).

The disordered stretch occupies residues glutamine 315–threonine 339. Over residues arginine 319–threonine 339 the composition is skewed to basic and acidic residues.

This sequence belongs to the GppA/Ppx family. As to quaternary structure, homodimer.

It carries out the reaction [phosphate](n) + H2O = [phosphate](n-1) + phosphate + H(+). Functionally, degradation of inorganic polyphosphates (polyP). Releases orthophosphate processively from the ends of the polyP chain. The protein is Exopolyphosphatase 1 of Mycobacterium leprae (strain TN).